Reading from the N-terminus, the 77-residue chain is U11-lycotoxin-Ls1a (77 aa).

Residues 1–20 form the signal peptide; the sequence is MKLIILTGLVLFAIVSFIEA. Residues 21-26 constitute a propeptide that is removed on maturation; sequence EEETGR.

This sequence belongs to the neurotoxin 19 (CSTX) family. 10 (U11-Lctx) subfamily. In terms of processing, contains 4 disulfide bonds. Expressed by the venom gland.

The protein localises to the secreted. The chain is U11-lycotoxin-Ls1a from Lycosa singoriensis (Wolf spider).